Consider the following 486-residue polypeptide: PTS system N-acetylmuramic acid-specific EIIBC component (486 aa).

The PTS EIIB type-1 domain occupies 1-89 (MAKITQTMIS…NKLIESVING (89 aa)). The Phosphocysteine intermediate; for EIIB activity role is filled by cysteine 28. A PTS EIIC type-1 domain is found at 127-486 (SKFATIFTPL…FFGSKDVDLS (360 aa)). The next 10 membrane-spanning stretches (helical) occupy residues 129 to 149 (FATI…LLGF), 170 to 190 (LIAY…ILIG), 196 to 216 (AFGG…LGYN), 230 to 250 (FFGY…AAII), 268 to 288 (MILT…VVIM), 312 to 332 (AAIL…QGFV), 347 to 367 (LFPI…ALYF), 381 to 401 (GAII…VTLP), 411 to 431 (IGGA…LPVG), and 453 to 473 (IFAG…VGFL).

The protein resides in the cell inner membrane. The catalysed reaction is N-acetyl-beta-D-muramate(out) + N(pros)-phospho-L-histidyl-[protein] = N-acetyl-beta-D-muramate 6-phosphate(in) + L-histidyl-[protein]. Its function is as follows. The phosphoenolpyruvate-dependent sugar phosphotransferase system (sugar PTS), a major carbohydrate active transport system, catalyzes the phosphorylation of incoming sugar substrates concomitantly with their translocation across the cell membrane. This system is involved in N-acetylmuramic acid (MurNAc) transport, yielding cytoplasmic MurNAc-6-P. Is also able to take up anhydro-N-acetylmuramic acid (anhMurNAc), but cannot phosphorylate the carbon 6, probably because of the 1,6-anhydro ring. This chain is PTS system N-acetylmuramic acid-specific EIIBC component (murP), found in Vibrio vulnificus (strain YJ016).